The chain runs to 233 residues: MAAPTAAGLCPRLRAWLPRLTQVRWSRYNPSFLEPEVNKELYQKPFNELSEEEKEKQELKAVHPIKAAPPSISSSVFSDPMISKFTNMMMKDGNKVLARSLMAQTLENIKRKQLEKYHRAPDDEKERVECNPYVIFHQALKNCQPIIGLSNITRGGKTYQVPVPLKDNRKRFLAMKWLITECRENKHRRTLMPEKLSEELIQAFNNEGPIIKKKHVLHKMAEANRAYAHFRWW.

A mitochondrion-targeting transit peptide spans methionine 1–tyrosine 28.

The protein belongs to the universal ribosomal protein uS7 family. As to quaternary structure, component of the mitochondrial ribosome small subunit (28S) which comprises a 12S rRNA and about 30 distinct proteins.

It is found in the mitochondrion. The chain is Small ribosomal subunit protein uS7m (MRPS7) from Gallus gallus (Chicken).